A 331-amino-acid chain; its full sequence is UPF0194 membrane protein YbhG (331 aa).

A signal peptide spans 1 to 15 (MKKPVVIGLAVVVLA). Residues 107–208 (EEIAQAAAAV…LNLQDSTLIA (102 aa)) are a coiled coil.

It belongs to the UPF0194 family.

The protein localises to the periplasm. This chain is UPF0194 membrane protein YbhG, found in Escherichia coli O157:H7 (strain EC4115 / EHEC).